The sequence spans 496 residues: MTLHVRPTDTKKLISGATGDWEVVIGLEVHAQVASNAKLFSGASTAFGGPPNDHVSLVDAAMPGMLPVINQECVAQAVRTGLGLKAQIHLTSVFDRKNYFYPDLPQGYQISQYKQPVVGEGEVIVDLPDGESIPVGIERLHLEQDAGKSIHDLSPTQSFVDLNRSGVALMEIVSRPDLRSAEEAKAYVTKLRTILRYLGTCDGDMEKGNLRADVNVSVRRPGEPFGTRCEIKNVNSIRFIGQAIETEARRQIEILEDGGSISQETRLFDPTRGETRSMRSKEEAHDYRYFPDPDLLPLVLKPEWVEELKSGLPELPDEKKARFIADYGLSPYDAGVLVAERETAAYFEQVADGGGVKRDGKAAANFVINELFGRLNKEGKDVTSSPVTPHQIGAILDLIAEGTISSKIAKDLFEIIFTEGGDPRVVVEARGLKQVTDLGAIEKVVDEIIAKNPDKVAQVLAKPTMLGWFVGQAMKASGGKANPQALNDILKAKLGI.

This sequence belongs to the GatB/GatE family. GatB subfamily. As to quaternary structure, heterotrimer of A, B and C subunits.

The catalysed reaction is L-glutamyl-tRNA(Gln) + L-glutamine + ATP + H2O = L-glutaminyl-tRNA(Gln) + L-glutamate + ADP + phosphate + H(+). The enzyme catalyses L-aspartyl-tRNA(Asn) + L-glutamine + ATP + H2O = L-asparaginyl-tRNA(Asn) + L-glutamate + ADP + phosphate + 2 H(+). Allows the formation of correctly charged Asn-tRNA(Asn) or Gln-tRNA(Gln) through the transamidation of misacylated Asp-tRNA(Asn) or Glu-tRNA(Gln) in organisms which lack either or both of asparaginyl-tRNA or glutaminyl-tRNA synthetases. The reaction takes place in the presence of glutamine and ATP through an activated phospho-Asp-tRNA(Asn) or phospho-Glu-tRNA(Gln). This Xanthobacter autotrophicus (strain ATCC BAA-1158 / Py2) protein is Aspartyl/glutamyl-tRNA(Asn/Gln) amidotransferase subunit B.